The sequence spans 273 residues: MPEMPEVETVRRTLRPLVVGKTIDHVDIWYDKVITGDPETFKRELKGKTFTVVDRYAKFLLFRLGDLTVVSHLRMEGKYHLTTWDAPVDKHEHLQFAFTDGSSLRYADVRKFGRLQLVETGTEFQVTGLKNLGVEANSPEFRLDYFEKGLKKRSMNIKSLLMSQTLVAGLGNIYVDEVLWQSRINPLTPANELTKDQVKQLHSAINETIEEATKYGGTTVHSFLNAEGGAGHYQEKLKVYGKEGQPCPRCGEDFVKIKICGRGTTYCLHCQKR.

Pro2 functions as the Schiff-base intermediate with DNA in the catalytic mechanism. Glu3 (proton donor) is an active-site residue. The Proton donor; for beta-elimination activity role is filled by Lys58. The DNA site is built by His91, Arg110, and Arg153. The segment at 238–272 (KVYGKEGQPCPRCGEDFVKIKICGRGTTYCLHCQK) adopts an FPG-type zinc-finger fold. Arg262 functions as the Proton donor; for delta-elimination activity in the catalytic mechanism.

Belongs to the FPG family. In terms of assembly, monomer. It depends on Zn(2+) as a cofactor.

It carries out the reaction Hydrolysis of DNA containing ring-opened 7-methylguanine residues, releasing 2,6-diamino-4-hydroxy-5-(N-methyl)formamidopyrimidine.. The catalysed reaction is 2'-deoxyribonucleotide-(2'-deoxyribose 5'-phosphate)-2'-deoxyribonucleotide-DNA = a 3'-end 2'-deoxyribonucleotide-(2,3-dehydro-2,3-deoxyribose 5'-phosphate)-DNA + a 5'-end 5'-phospho-2'-deoxyribonucleoside-DNA + H(+). In terms of biological role, involved in base excision repair of DNA damaged by oxidation or by mutagenic agents. Acts as a DNA glycosylase that recognizes and removes damaged bases. Has a preference for oxidized purines, such as 7,8-dihydro-8-oxoguanine (8-oxoG). Has AP (apurinic/apyrimidinic) lyase activity and introduces nicks in the DNA strand. Cleaves the DNA backbone by beta-delta elimination to generate a single-strand break at the site of the removed base with both 3'- and 5'-phosphates. This Lactobacillus delbrueckii subsp. bulgaricus (strain ATCC BAA-365 / Lb-18) protein is Formamidopyrimidine-DNA glycosylase.